Here is a 731-residue protein sequence, read N- to C-terminus: Inclusion body clearance protein IML2 (731 aa).

Positions 1-26 are disordered; the sequence is MFRVFGSFGSKGNQSSGEEQSTKTKQ. The span at 10–26 shows a compositional bias: polar residues; it reads SKGNQSSGEEQSTKTKQ. 3 positions are modified to phosphoserine: Ser265, Ser268, and Ser378. The residue at position 380 (Thr380) is a Phosphothreonine. 2 positions are modified to phosphoserine: Ser383 and Ser392.

This sequence belongs to the IML2 family. In terms of assembly, interacts with lipid droplet proteins PET10 and PDR16.

Its subcellular location is the cytoplasm. The protein localises to the nucleus. Its function is as follows. Inclusion body (IB) resident protein that interacts strongly with lipid droplet (LD) proteins. Involved in LD-mediated IB clearing after protein folding stress, probably by enabling access to the IBs of an LD-stored soluble sterol derivative that acts as a chaperone in inclusion clearing. The sequence is that of Inclusion body clearance protein IML2 from Saccharomyces cerevisiae (strain ATCC 204508 / S288c) (Baker's yeast).